The sequence spans 544 residues: CTP synthase (544 aa).

The segment at 1–267 (MTKFVFVTGG…AQRVLEILNL (267 aa)) is amidoligase domain. S13 is a binding site for CTP. S13 provides a ligand contact to UTP. ATP is bound at residue 14–19 (SIGKGI). Y54 contributes to the L-glutamine binding site. D71 contributes to the ATP binding site. Positions 71 and 141 each coordinate Mg(2+). Residues 148-150 (DIE), 188-193 (KTKPTQ), and K224 contribute to the CTP site. Residues 188 to 193 (KTKPTQ) and K224 each bind UTP. Residues 292–534 (EIAIVGKYVR…IEAALRSRPQ (243 aa)) form the Glutamine amidotransferase type-1 domain. G354 serves as a coordination point for L-glutamine. C381 serves as the catalytic Nucleophile; for glutamine hydrolysis. L-glutamine-binding positions include 382 to 385 (LGMQ), E405, and R462. Active-site residues include H507 and E509.

It belongs to the CTP synthase family. In terms of assembly, homotetramer.

It carries out the reaction UTP + L-glutamine + ATP + H2O = CTP + L-glutamate + ADP + phosphate + 2 H(+). The enzyme catalyses L-glutamine + H2O = L-glutamate + NH4(+). The catalysed reaction is UTP + NH4(+) + ATP = CTP + ADP + phosphate + 2 H(+). Its pathway is pyrimidine metabolism; CTP biosynthesis via de novo pathway; CTP from UDP: step 2/2. Allosterically activated by GTP, when glutamine is the substrate; GTP has no effect on the reaction when ammonia is the substrate. The allosteric effector GTP functions by stabilizing the protein conformation that binds the tetrahedral intermediate(s) formed during glutamine hydrolysis. Inhibited by the product CTP, via allosteric rather than competitive inhibition. In terms of biological role, catalyzes the ATP-dependent amination of UTP to CTP with either L-glutamine or ammonia as the source of nitrogen. Regulates intracellular CTP levels through interactions with the four ribonucleotide triphosphates. This Synechococcus sp. (strain JA-2-3B'a(2-13)) (Cyanobacteria bacterium Yellowstone B-Prime) protein is CTP synthase.